Reading from the N-terminus, the 428-residue chain is Enolase (428 aa).

Residue glutamine 163 coordinates (2R)-2-phosphoglycerate. The active-site Proton donor is glutamate 205. Mg(2+) contacts are provided by aspartate 242, glutamate 286, and aspartate 313. Residues lysine 338, arginine 367, serine 368, and lysine 389 each coordinate (2R)-2-phosphoglycerate. Lysine 338 serves as the catalytic Proton acceptor.

Belongs to the enolase family. Mg(2+) serves as cofactor.

Its subcellular location is the cytoplasm. The protein localises to the secreted. It localises to the cell surface. It catalyses the reaction (2R)-2-phosphoglycerate = phosphoenolpyruvate + H2O. It participates in carbohydrate degradation; glycolysis; pyruvate from D-glyceraldehyde 3-phosphate: step 4/5. In terms of biological role, catalyzes the reversible conversion of 2-phosphoglycerate (2-PG) into phosphoenolpyruvate (PEP). It is essential for the degradation of carbohydrates via glycolysis. The sequence is that of Enolase from Lactobacillus helveticus (strain DPC 4571).